Consider the following 521-residue polypeptide: Fucosyltransferase 3 (521 aa).

The span at 1 to 12 shows a compositional bias: basic and acidic residues; sequence MKRGKKNSDAGD. The interval 1–29 is disordered; that stretch reads MKRGKKNSDAGDRLTNSDTRTGSSELNAM. Residues 1–39 lie on the Cytoplasmic side of the membrane; sequence MKRGKKNSDAGDRLTNSDTRTGSSELNAMMKPSLSSMKT. A compositionally biased stretch (polar residues) spans 14 to 26; it reads LTNSDTRTGSSEL. Residues 40–60 traverse the membrane as a helical; Signal-anchor for type II membrane protein segment; it reads MGLLLAVLMVASVMFSLSVVL. The Lumenal segment spans residues 61 to 521; it reads RDPPSDDVIE…QATLFHGCKD (461 aa). N-linked (GlcNAc...) asparagine glycans are attached at residues Asn-152, Asn-222, and Asn-493.

It belongs to the glycosyltransferase 37 family. Expressed in roots, stems, leaves, flowers, siliques and seedlings.

The protein localises to the golgi apparatus. It is found in the golgi stack membrane. It participates in protein modification; protein glycosylation. Its function is as follows. May be involved in cell wall biosynthesis. May act as a fucosyltransferase. This chain is Fucosyltransferase 3 (FUT3), found in Arabidopsis thaliana (Mouse-ear cress).